Consider the following 71-residue polypeptide: Mitotic-spindle organizing protein 1B (71 aa).

This sequence belongs to the MOZART1 family. As to quaternary structure, homo- and heteromultimer. Part of the gamma-tubulin complex. Interacts with TUBB2/TUBB3, GIP2, GCP3 and TSA1 (via C-terminal domain). As to expression, mostly expressed in siliques and flowers, and, to a lower extent, in leaves, roots and seedlings, with highest levels in young tissues and meristematic cells, and the vasculature.

It localises to the cytoplasm. The protein resides in the cytoskeleton. It is found in the microtubule organizing center. Its subcellular location is the spindle. The protein localises to the nucleus. It localises to the phragmoplast. The protein resides in the nucleus envelope. In terms of biological role, required for gamma-tubulin complex recruitment to the microtubule organizing centers (MTOCs). During mitosis, modulates gamma-tubulin complex localization, spindle stability and chromosomal segregation. Necessary for gametophyte development and embryogenesis. The chain is Mitotic-spindle organizing protein 1B (GIP1) from Arabidopsis thaliana (Mouse-ear cress).